Consider the following 824-residue polypeptide: Leucine--tRNA ligase (824 aa).

A 'HIGH' region motif is present at residues proline 42–histidine 52. The 'KMSKS' region signature appears at lysine 581 to serine 585. Position 584 (lysine 584) interacts with ATP.

Belongs to the class-I aminoacyl-tRNA synthetase family.

The protein resides in the cytoplasm. It carries out the reaction tRNA(Leu) + L-leucine + ATP = L-leucyl-tRNA(Leu) + AMP + diphosphate. The chain is Leucine--tRNA ligase from Geobacter metallireducens (strain ATCC 53774 / DSM 7210 / GS-15).